The chain runs to 540 residues: Mitochondrial antiviral-signaling protein (540 aa).

P2 is modified (N-acetylproline). Residues 2–513 (PFAEDKTYKY…REVPCHRPSP (512 aa)) are Cytoplasmic-facing. Residues K7 and K10 each participate in a glycyl lysine isopeptide (Lys-Gly) (interchain with G-Cter in ubiquitin) cross-link. The CARD domain maps to 10–77 (KYICRNFSNF…WVEYFIAALR (68 aa)). Residues 10 to 77 (KYICRNFSNF…WVEYFIAALR (68 aa)) form a required for interaction with NLRX1 region. C79 carries the S-palmitoyl cysteine lipid modification. The tract at residues 95 to 297 (YQPRTSDRPP…EAPANSLPSK (203 aa)) is disordered. Over residues 106–122 (PLEPPSLPAERPGPPTP) the composition is skewed to pro residues. The segment at 143-147 (PVQET) is interaction with TRAF2. Polar residues-rich tracts occupy residues 145–165 (QETQ…QTLS) and 179–216 (ESSS…SLTP). A phosphoserine mark is found at S152, S157, S165, S180, and S188. The interaction with TRAF6 stretch occupies residues 153-158 (PGENSE). A Phosphothreonine modification is found at T215. Phosphoserine is present on residues S222 and S233. Residue T234 is modified to Phosphothreonine. The residue at position 236 (R236) is an Asymmetric dimethylarginine. Residues 241-266 (PGPTGSVVSTGTSFSSSSPGLASAGA) are compositionally biased toward low complexity. Phosphoserine occurs at positions 253 and 258. Glycyl lysine isopeptide (Lys-Gly) (interchain with G-Cter in ubiquitin) cross-links involve residues K311 and K325. 2 disordered regions span residues 314–358 (ANPA…RAGM) and 373–419 (SAST…SELS). 3 stretches are compositionally biased toward polar residues: residues 317 to 331 (ASVS…TSSK), 339 to 355 (NALT…NSTR), and 373 to 382 (SASTVPTDGS). Over residues 388 to 403 (TPAAPTPAGATGGSSA) the composition is skewed to low complexity. S408 is modified (phosphoserine). The short motif at 439–442 (LAIS) is the pLxIS motif element. S442 carries the post-translational modification Phosphoserine; by TBK1. The interaction with TRAF6 stretch occupies residues 455 to 460 (PEENEY). Residues K461 and K500 each participate in a glycyl lysine isopeptide (Lys-Gly) (interchain with G-Cter in ubiquitin) cross-link. K461 participates in a covalent cross-link: (Microbial infection) Glycyl lysine isopeptide (Lys-Gly) (interchain with G-Cter in UFM1). Residues 476 to 507 (IQLLEGNPGPPADPDGGPRPQADRKFQEREVP) are disordered. The span at 496–507 (QADRKFQEREVP) shows a compositional bias: basic and acidic residues. Residues 514–534 (GALWLQVAVTGVLVVTLLVVL) form a helical membrane-spanning segment. Residues 535-540 (YRRRLH) lie on the Mitochondrial intermembrane side of the membrane.

Self-associates and polymerizes (via CARD domains) to form 400 nM long three-stranded helical filaments on mitochondria, filament nucleation requires interaction with RIGI whose CARD domains act as a template for filament assembly. Interacts with RIGI, IFIH1/MDA5, TRAF2, TRAF6 and C1QBP. May interact with FADD, RIPK1, CHUK and IKBKB. Interacts (when phosphorylated) with IRF3; following activation and phosphorylation on the pLxIS motif by TBK1, recruits IRF3. Interacts with NLRX1. Interaction with NLRX1 requires the CARD domain. Interacts with PSMA7. Interacts with TRAFD1. Interacts (via C-terminus) with PCBP2 in a complex containing MAVS/IPS1, PCBP2 and ITCH. Interacts with CYLD. Interacts with SRC. Interacts with DHX58/LGP2 and IKBKE. Interacts with STING1. Interacts with IFIT3 (via N-terminus). Interacts with TBK1 only in the presence of IFIT3. Interacts with TTLL12; the interaction prevents MAVS binding to TBK1 and IKBKE. Interacts with MUL1. Interacts with ANKRD17. Interacts with NDFIP1. Interacts with SMURF1; the interaction is mediated by NDFIP1 and leads to MAVS ubiquitination and degradation. Interacts with UBXN1; this interaction inhibits MAVS-mediated antiviral pathway. Interacts (via C-terminus) with GPATCH3; the interaction is markedly increased upon viral infection. Directly interacts (via CARD domain) with ATG5 and ATG12, either as ATG5 and ATG12 monomers or as ATG12-ATG5 conjugates. Interacts with DHX33 (via the helicase C-terminal domain). Interacts with DDX3X (via C-terminus); this interaction occurs rapidly, but transiently after Sendai virus infection. The interaction with DDX3X potentiates MAVS-mediated IFNB induction. Conversely inhibition of this interaction, for instance by HCV core protein, prevents MAVS-mediated IFNB induction. Transiently interacts with TRAF3 early during Sendai virus infection. Interacts with CLPB; the interaction is enhanced by Sendai virus infection. Interacts with TRAF3IP3. Interacts with TOMM70; the interaction is enhanced by Sendai virus infection. Interacts with ZNFX1. Interacts with N4BP3; this interaction promotes the polyubiquitination of MAVS. Interacts with TAX1BP1; this interaction induces MAVS polyubiquitination. Interacts with NLRP3; promoting NLRP3 recruitment to mitochondria and activation of the NLRP3 inflammasome. Interacts with ECSIT; this interaction bridges RIGI to the MAVS complex at the mitochondrion. Interacts with UBL7; this interaction promotes MAVS 'Lys-27'-linked ubiquitination leading to type I interferon production. Interacts (via transmembrane domain) with SMIM30/MAVI1 (via transmembrane domain); the interaction disrupts MAVS interaction with RIGI and inhibits MAVS aggregation, resulting in the repression of type I interferon signaling and innate immune responses. In terms of assembly, (Microbial infection) Interacts with hepatitis C virus (HCV) NS3/4A protease; this interaction leads to MAVS cleavage, thereby preventing the establishment of an antiviral state. As to quaternary structure, (Microbial infection) Interacts with hepatitis GB virus B NS3/4A protease; this interaction leads to MAVS cleavage. (Microbial infection) Interacts with human respiratory syncytial virus/HRSV protein NS1; this interaction disrupts MAVS binding to RIGI. In terms of assembly, (Microbial infection) Interacts with Andes virus Nnon-structural protein NS-S; this interaction may reduce MAVS ubiquitination and leads to inhibition of MAVS-induced type-I IFN signaling pathway. As to quaternary structure, (Microbial infection) Interacts with Seneca Valley virus protease 3C; this interaction allows the cleavage of MAVS and subsequent suppression of host innate immunity. (Microbial infection) Interacts with SARS-CoV virus protein ORF9b; this interaction mediates MAVS proteasomal degradation. In terms of assembly, (Microbial infection) Interacts with SARS-CoV-2 virus protein M; this interaction impairs MAVS self-association and its recruitment of downstream components. As to quaternary structure, (Microbial infection) Interacts with foot-and-mouth disease virus protein VP1; this interaction competes with TRAF3 interaction to MAVS leading to suppression of host innate immunity. (Microbial infection) Interacts with Epstein-Barr virus protein BILF1; this interaction mediates MAVS routing from mitochondria to lysosomes. Post-translationally, following activation, phosphorylated by TBK1 at Ser-442 in the pLxIS motif. The phosphorylated pLxIS motif constitutes an IRF3-binding motif, leading to recruitment of the transcription factor IRF3 to induce type-I interferons and other cytokines. In terms of processing, ubiquitinated. Undergoes 'Lys-48'-linked polyubiquitination catalyzed by ITCH; ITCH-dependent polyubiquitination is mediated by the interaction with PCBP2 and leads to MAVS/IPS1 proteasomal degradation. Ubiquitinated by RNF125, leading to its degradation by the proteasome. Undergoes 'Lys-48'-linked ubiquitination catalyzed by SMURF1. Undergoes 'Lys-48'-linked ubiquitination catalyzed by MARCHF5 at Lys-7 and Lys-500, leading to proteasomal degradation. Ubiquitinated via 'Lys-63'-linked ubiquitination at Lys-10, Lys-311 and Lys-461 by UBE2N and TRIM31, promoting MAVS polymerization and formation of three-stranded helical filaments on mitochondria. Undergoes 'Lys-63'-linked ubiquitination leading to enhanced interaction between MAVS and TRAF2. Undergoes 'Lys-27'-linked ubiquitination by TRIM21 leading to enhanced interaction between MAVS and TBK1. Deubiquitinated by USP10 leading to attenuation of RIGI-mediated MAVS aggregation and production of type I interferon. Undergoes 'Lys-48'-linked polyubiquitination catalyzed by RNF115 leading to its degradation. Palmitoylated by ZHDDC4. Palmitoylation promotes MAVS stabilization and activation by inhibiting 'Lys-48'- but facilitating 'Lys-63'-linked ubiquitination. Post-translationally, proteolytically cleaved by apoptotic caspases during apoptosis, leading to its inactivation. Cleavage by CASP3 during virus-induced apoptosis inactivates it, preventing cytokine overproduction. In terms of processing, (Microbial infection) Cleaved and degraded by hepatitis A virus (HAV) protein 3ABC allowing the virus to disrupt the activation of host IRF3 through the MDA5 pathway. (Microbial infection) Cleaved by the protease 2A of coxsackievirus B3, poliovirus and enterovirus 71 allowing the virus to disrupt the host type I interferon production. Post-translationally, (Microbial infection) Cleaved by Seneca Valley virus protease 3C allowing the virus to suppress interferon type-I production. In terms of processing, (Microbial infection) Cleaved by HCV protease NS3/4A, thereby preventing the establishment of an antiviral state. (Microbial infection) UFMylated by ULF1 in association with Epstein-Barr virus BILF1; leading to MAVS routing to the lysosome. As to expression, present in T-cells, monocytes, epithelial cells and hepatocytes (at protein level). Ubiquitously expressed, with highest levels in heart, skeletal muscle, liver, placenta and peripheral blood leukocytes.

It localises to the mitochondrion outer membrane. The protein localises to the mitochondrion. It is found in the peroxisome. Adapter required for innate immune defense against viruses. Acts downstream of DHX33, RIGI and IFIH1/MDA5, which detect intracellular dsRNA produced during viral replication, to coordinate pathways leading to the activation of NF-kappa-B, IRF3 and IRF7, and to the subsequent induction of antiviral cytokines such as IFNB and RANTES (CCL5). Peroxisomal and mitochondrial MAVS act sequentially to create an antiviral cellular state. Upon viral infection, peroxisomal MAVS induces the rapid interferon-independent expression of defense factors that provide short-term protection, whereas mitochondrial MAVS activates an interferon-dependent signaling pathway with delayed kinetics, which amplifies and stabilizes the antiviral response. May activate the same pathways following detection of extracellular dsRNA by TLR3. May protect cells from apoptosis. Involved in NLRP3 inflammasome activation by mediating NLRP3 recruitment to mitochondria. The polypeptide is Mitochondrial antiviral-signaling protein (Homo sapiens (Human)).